The chain runs to 379 residues: RNA-splicing ligase RtcB2 (379 aa).

Mn(2+)-binding residues include Asp74, Cys77, His137, His168, and His239. A GMP-binding site is contributed by 136–140 (NHFVE). GMP contacts are provided by residues 239–240 (HN), Ser277, 294–297 (HGAG), and Lys372. The active-site GMP-histidine intermediate is His294.

It belongs to the RtcB family. RtcB2 subfamily. Requires Mn(2+) as cofactor.

It carries out the reaction a 3'-end 3'-phospho-ribonucleotide-RNA + a 5'-end dephospho-ribonucleoside-RNA + GTP = a ribonucleotidyl-ribonucleotide-RNA + GMP + diphosphate. Functionally, GTP-dependent RNA ligase involved in rRNA repair. Repairs damaged 16S rRNA in 30S subunits that has been cleaved between adenine-1493 and guanosine-1494 (E.coli nubering). This specific cleavage is inflicted by CdiA (ECL_04451) or by colicin E3-type (ColE3) proteins. Poorly repairs damaged rRNA in the 70S ribosome; addition of release factor PrfH improves repair about 3-fold in vitro, probably because PrfH hydrolyzes the nascent chain allowing ribosomal subunit dissociation. In vivo the PrfH-RtcB2 pair restores growth in the presence of ribotoxins that specifically create this damage. Does not repair damaged tRNA (tested with tRNA(Asp) and tRNA(Arg)). The polypeptide is RNA-splicing ligase RtcB2 (Escherichia coli (strain ATCC 25922 / DSM 1103 / LMG 8223 / NCIMB 12210 / NCTC 12241 / WDCM 00013 / Seattle 1946)).